A 105-amino-acid polypeptide reads, in one-letter code: Endoribonuclease MazF1 (105 aa).

This sequence belongs to the PemK/MazF family. In terms of assembly, forms a complex with cognate antitoxin MazE1.

Its function is as follows. Toxic component of a type II toxin-antitoxin (TA) system. Acts as an endoribonuclease on single-strand RNA, cleaving between the first and second bases in the sequence UCGCU. Neutralized by coexpression with cognate antitoxin MazE1. This Mycobacterium bovis (strain ATCC BAA-935 / AF2122/97) protein is Endoribonuclease MazF1 (mazF1).